Reading from the N-terminus, the 200-residue chain is Recombination protein RecR (200 aa).

The segment at 57 to 72 adopts a C4-type zinc-finger fold; that stretch reads CQHCRTFTENSLCDIC. One can recognise a Toprim domain in the interval 81–176; the sequence is GQLCIVETPA…NITRIAHGVP (96 aa).

Belongs to the RecR family.

Its function is as follows. May play a role in DNA repair. It seems to be involved in an RecBC-independent recombinational process of DNA repair. It may act with RecF and RecO. This chain is Recombination protein RecR, found in Tolumonas auensis (strain DSM 9187 / NBRC 110442 / TA 4).